The chain runs to 157 residues: S-ribosylhomocysteine lyase (157 aa).

Fe cation contacts are provided by H54, H58, and C126.

Belongs to the LuxS family. Homodimer. Requires Fe cation as cofactor.

It carries out the reaction S-(5-deoxy-D-ribos-5-yl)-L-homocysteine = (S)-4,5-dihydroxypentane-2,3-dione + L-homocysteine. Functionally, involved in the synthesis of autoinducer 2 (AI-2) which is secreted by bacteria and is used to communicate both the cell density and the metabolic potential of the environment. The regulation of gene expression in response to changes in cell density is called quorum sensing. Catalyzes the transformation of S-ribosylhomocysteine (RHC) to homocysteine (HC) and 4,5-dihydroxy-2,3-pentadione (DPD). In Bacillus cereus (strain G9842), this protein is S-ribosylhomocysteine lyase.